A 209-amino-acid polypeptide reads, in one-letter code: Large ribosomal subunit protein uL3 (209 aa).

The disordered stretch occupies residues 128–154 (QQRGPMTHGSKFHRAPGSMGASSDPSR).

This sequence belongs to the universal ribosomal protein uL3 family. Part of the 50S ribosomal subunit. Forms a cluster with proteins L14 and L19.

In terms of biological role, one of the primary rRNA binding proteins, it binds directly near the 3'-end of the 23S rRNA, where it nucleates assembly of the 50S subunit. This chain is Large ribosomal subunit protein uL3, found in Clostridium beijerinckii (strain ATCC 51743 / NCIMB 8052) (Clostridium acetobutylicum).